The primary structure comprises 126 residues: Arginine decarboxylase proenzyme (126 aa).

The active-site Schiff-base intermediate with substrate; via pyruvic acid is the serine 74. Serine 74 is subject to Pyruvic acid (Ser); by autocatalysis. The Proton acceptor; for processing activity role is filled by histidine 79. The active-site Proton donor; for catalytic activity is the cysteine 94.

The protein belongs to the prokaryotic AdoMetDC family. Type 1 subfamily. As to quaternary structure, heterooctamer of four alpha and four beta chains arranged as a tetramer of alpha/beta heterodimers. It depends on pyruvate as a cofactor. Is synthesized initially as an inactive proenzyme. Formation of the active enzyme involves a self-maturation process in which the active site pyruvoyl group is generated from an internal serine residue via an autocatalytic post-translational modification. Two non-identical subunits are generated from the proenzyme in this reaction, and the pyruvate is formed at the N-terminus of the alpha chain, which is derived from the carboxyl end of the proenzyme. The post-translation cleavage follows an unusual pathway, termed non-hydrolytic serinolysis, in which the side chain hydroxyl group of the serine supplies its oxygen atom to form the C-terminus of the beta chain, while the remainder of the serine residue undergoes an oxidative deamination to produce ammonia and the pyruvoyl group blocking the N-terminus of the alpha chain.

The catalysed reaction is L-arginine + H(+) = agmatine + CO2. It participates in amine and polyamine biosynthesis; agmatine biosynthesis; agmatine from L-arginine: step 1/1. In terms of biological role, specifically catalyzes the decarboxylation of L-arginine to agmatine. Has no S-adenosylmethionine decarboxylase (AdoMetDC) activity. This is Arginine decarboxylase proenzyme from Pyrobaculum aerophilum (strain ATCC 51768 / DSM 7523 / JCM 9630 / CIP 104966 / NBRC 100827 / IM2).